The sequence spans 428 residues: MIARETLADELALARERTLRLVEFDDAELHRQYNPLMSPLVWDLAHIGQQEELWLLRDGNPDRPGMLAPEVDRLYDAFEHSRASRVNLPLLPPSDARAYCATVRAKALDTLDTLPEDDPGFRFALVISHENQHDETMLQALNLREGPPLLDTGIPLPAGRPGVAGTSVLVPGGPFVLGVDALTEPHSLDNERPAHVVDIPSFRIGRVPVTNAEWREFIDDGGYDQPRWWSPRGWAHRQEAGLVAPQFWNPDGTRTRFGHIEEIPGDEPVQHVTFFEAEAYAAWAGARLPTEIEWEKACAWDPVAGARRRFPWGSAQPSAALANLGGDARRPAPVGAYPAGASAYGAEQMLGDVWEWTSSPLRPWPGFTPMIYERYSTPFFEGTTSGDYRVLRGGSWAVAPGILRPSFRNWDHPIRRQIFSGVRLAWDV.

His46 contributes to the Fe cation binding site. 82–85 (RASR) contributes to the gamma-L-glutamyl-L-cysteine binding site. 2 residues coordinate Fe cation: His129 and His133. Asp411 and Arg415 together coordinate gamma-L-glutamyl-L-cysteine.

The protein belongs to the EgtB family. Monomer. Fe(2+) is required as a cofactor.

The catalysed reaction is gamma-L-glutamyl-L-cysteine + hercynine + O2 = gamma-L-glutamyl-hercynylcysteine S-oxide + H2O. The protein operates within amino-acid biosynthesis; ergothioneine biosynthesis. In terms of biological role, catalyzes the oxidative sulfurization of hercynine (N-alpha,N-alpha,N-alpha-trimethyl-L-histidine) into hercynyl-gamma-L-glutamyl-L-cysteine sulfoxide, a step in the biosynthesis pathway of ergothioneine. Cannot use the alternative thiols cysteine, N-acetylcysteine, or glutathione instead of gamma-glutamylcysteine as substrates, and histidine is a poor sulfur acceptor substrate compared to hercynine. In Mycolicibacterium smegmatis (strain ATCC 700084 / mc(2)155) (Mycobacterium smegmatis), this protein is Hercynine oxygenase.